The sequence spans 177 residues: ATP synthase subunit delta (177 aa).

The protein belongs to the ATPase delta chain family. As to quaternary structure, F-type ATPases have 2 components, F(1) - the catalytic core - and F(0) - the membrane proton channel. F(1) has five subunits: alpha(3), beta(3), gamma(1), delta(1), epsilon(1). F(0) has three main subunits: a(1), b(2) and c(10-14). The alpha and beta chains form an alternating ring which encloses part of the gamma chain. F(1) is attached to F(0) by a central stalk formed by the gamma and epsilon chains, while a peripheral stalk is formed by the delta and b chains.

Its subcellular location is the cell inner membrane. Functionally, f(1)F(0) ATP synthase produces ATP from ADP in the presence of a proton or sodium gradient. F-type ATPases consist of two structural domains, F(1) containing the extramembraneous catalytic core and F(0) containing the membrane proton channel, linked together by a central stalk and a peripheral stalk. During catalysis, ATP synthesis in the catalytic domain of F(1) is coupled via a rotary mechanism of the central stalk subunits to proton translocation. Its function is as follows. This protein is part of the stalk that links CF(0) to CF(1). It either transmits conformational changes from CF(0) to CF(1) or is implicated in proton conduction. In Shewanella sp. (strain ANA-3), this protein is ATP synthase subunit delta.